Consider the following 893-residue polypeptide: Translation initiation factor IF-2 (893 aa).

The interval 1–266 (MVDTKNPGDK…AKPAPSKQRG (266 aa)) is disordered. Positions 59-70 (PADAPTAAAAAP) are enriched in low complexity. Residues 71–92 (APAPAPVPSAAPRPAAPPPPSR) are compositionally biased toward pro residues. Residues 93 to 104 (PQQSRSQSPSRS) are compositionally biased toward low complexity. Basic and acidic residues-rich tracts occupy residues 128-148 (ARVR…RRNS) and 155-196 (AERE…EAKR). Residues 197–226 (PAAAATPAKSATPAARPTGAPAVRAPGVAA) show a composition bias toward low complexity. In terms of domain architecture, tr-type G spans 389 to 560 (PRSPVVTVMG…ALQAELLDLK (172 aa)). Residues 398 to 405 (GHVDHGKT) form a G1 region. A GTP-binding site is contributed by 398–405 (GHVDHGKT). The tract at residues 423-427 (GITQH) is G2. Positions 446 to 449 (DTPG) are G3. GTP is bound by residues 446–450 (DTPGH) and 500–503 (NKID). The G4 stretch occupies residues 500–503 (NKID). The G5 stretch occupies residues 536–538 (SAK).

The protein belongs to the TRAFAC class translation factor GTPase superfamily. Classic translation factor GTPase family. IF-2 subfamily.

It is found in the cytoplasm. Functionally, one of the essential components for the initiation of protein synthesis. Protects formylmethionyl-tRNA from spontaneous hydrolysis and promotes its binding to the 30S ribosomal subunits. Also involved in the hydrolysis of GTP during the formation of the 70S ribosomal complex. The protein is Translation initiation factor IF-2 of Rhodopseudomonas palustris (strain BisA53).